The primary structure comprises 378 residues: Histone deacetylase 8 (378 aa).

Positions Arg-15 to Gly-325 are histone deacetylase. Asp-102 is a substrate binding site. The active-site Proton acceptor is His-144. Position 152 (Gly-152) interacts with substrate. Residues Asp-179, His-181, and Asp-268 each contribute to the a divalent metal cation site. Tyr-307 provides a ligand contact to substrate.

It belongs to the histone deacetylase family. HD type 1 subfamily. The cofactor is a divalent metal cation.

The protein localises to the nucleus. It is found in the chromosome. Its subcellular location is the cytoplasm. The catalysed reaction is N(6)-acetyl-L-lysyl-[histone] + H2O = L-lysyl-[histone] + acetate. The enzyme catalyses N(6)-acetyl-L-lysyl-[protein] + H2O = L-lysyl-[protein] + acetate. It catalyses the reaction N(6)-(2E)-butenoyl-L-lysyl-[protein] + H2O = (2E)-2-butenoate + L-lysyl-[protein]. Its activity is regulated as follows. Its activity is inhibited by trichostatin A (TSA) and butyrate, 2 well known histone deacetylase inhibitors. Its function is as follows. Histone deacetylase that catalyzes the deacetylation of lysine residues on the N-terminal part of the core histones (H2A, H2B, H3 and H4). Histone deacetylation gives a tag for epigenetic repression and plays an important role in transcriptional regulation, cell cycle progression and developmental events. Histone deacetylases act via the formation of large multiprotein complexes. Also involved in the deacetylation of non-histone proteins. In addition to protein deacetylase activity, also has protein-lysine deacylase activity: acts as a protein decrotonylase by mediating decrotonylation ((2E)-butenoyl) of histones. This Danio rerio (Zebrafish) protein is Histone deacetylase 8 (hdac8).